The chain runs to 339 residues: 3-isopropylmalate dehydrogenase (339 aa).

Positions 88, 98, 122, and 212 each coordinate substrate. Positions 212, 236, and 240 each coordinate Mg(2+). 272 to 284 (GSAPDIAGQGIAD) is a binding site for NAD(+).

It belongs to the isocitrate and isopropylmalate dehydrogenases family. LeuB type 2 subfamily. Homodimer. Mg(2+) is required as a cofactor. It depends on Mn(2+) as a cofactor.

Its subcellular location is the cytoplasm. It catalyses the reaction (2R,3S)-3-isopropylmalate + NAD(+) = 4-methyl-2-oxopentanoate + CO2 + NADH. It functions in the pathway amino-acid biosynthesis; L-leucine biosynthesis; L-leucine from 3-methyl-2-oxobutanoate: step 3/4. Its function is as follows. Catalyzes the oxidation of 3-carboxy-2-hydroxy-4-methylpentanoate (3-isopropylmalate) to 3-carboxy-4-methyl-2-oxopentanoate. The product decarboxylates to 4-methyl-2 oxopentanoate. The sequence is that of 3-isopropylmalate dehydrogenase from Corynebacterium urealyticum (strain ATCC 43042 / DSM 7109).